A 325-amino-acid chain; its full sequence is Ribonuclease Z (325 aa).

Zn(2+) contacts are provided by H63, H65, D67, H68, H147, D218, and H276. D67 acts as the Proton acceptor in catalysis.

This sequence belongs to the RNase Z family. In terms of assembly, homodimer. Zn(2+) is required as a cofactor.

It carries out the reaction Endonucleolytic cleavage of RNA, removing extra 3' nucleotides from tRNA precursor, generating 3' termini of tRNAs. A 3'-hydroxy group is left at the tRNA terminus and a 5'-phosphoryl group is left at the trailer molecule.. In terms of biological role, zinc phosphodiesterase, which displays some tRNA 3'-processing endonuclease activity. Probably involved in tRNA maturation, by removing a 3'-trailer from precursor tRNA. The polypeptide is Ribonuclease Z (Oenococcus oeni (strain ATCC BAA-331 / PSU-1)).